The following is a 271-amino-acid chain: GTP cyclohydrolase FolE2 (271 aa).

Belongs to the GTP cyclohydrolase IV family.

The enzyme catalyses GTP + H2O = 7,8-dihydroneopterin 3'-triphosphate + formate + H(+). It functions in the pathway cofactor biosynthesis; 7,8-dihydroneopterin triphosphate biosynthesis; 7,8-dihydroneopterin triphosphate from GTP: step 1/1. Functionally, converts GTP to 7,8-dihydroneopterin triphosphate. The chain is GTP cyclohydrolase FolE2 from Geotalea uraniireducens (strain Rf4) (Geobacter uraniireducens).